Consider the following 303-residue polypeptide: MEHIFLALRSPGPELFQLGPFSLRWYGLLIAISVLVGLNLSSELASKKGLKKSLINDLLPILVLASVIGARIYYVAFEWRNYTGKNFWSSINFLNLNIPIPSALEIWGGGIAIHGALIMGTLSIIFFCRWRQEHFWDVIDVLVPSVALGQAIGRWGNFFNNEAFGIPTNLPWKLFIPYRFRPEIFSTIDYFHPTFLYESVWNIFVFGILIFLFRKANKKDLKLPPGSLSCLYLITYSLGRFWIEGLRTDPLCLGGVPPFCEGGLRIAQLISLFLISAGLLGIWRIYVSKKALPDPSSMNGRNQ.

Helical transmembrane passes span 18 to 38 (LGPF…LVGL), 58 to 78 (LLPI…VAFE), 106 to 126 (IWGG…SIIF), and 133 to 153 (EHFW…QAIG). Residue arginine 154 coordinates a 1,2-diacyl-sn-glycero-3-phospho-(1'-sn-glycerol). Helical transmembrane passes span 193-213 (PTFL…IFLF), 223-243 (LPPG…RFWI), and 266-286 (IAQL…WRIY).

The protein belongs to the Lgt family.

It localises to the cell inner membrane. It catalyses the reaction L-cysteinyl-[prolipoprotein] + a 1,2-diacyl-sn-glycero-3-phospho-(1'-sn-glycerol) = an S-1,2-diacyl-sn-glyceryl-L-cysteinyl-[prolipoprotein] + sn-glycerol 1-phosphate + H(+). Its pathway is protein modification; lipoprotein biosynthesis (diacylglyceryl transfer). Its function is as follows. Catalyzes the transfer of the diacylglyceryl group from phosphatidylglycerol to the sulfhydryl group of the N-terminal cysteine of a prolipoprotein, the first step in the formation of mature lipoproteins. The chain is Phosphatidylglycerol--prolipoprotein diacylglyceryl transferase from Prochlorococcus marinus (strain NATL2A).